Here is a 445-residue protein sequence, read N- to C-terminus: Homogentisate 1,2-dioxygenase (445 aa).

An N6-acetyllysine modification is found at Lys-98. Fe cation-binding residues include His-335, Glu-341, and His-371. Lys-414 carries the N6-succinyllysine modification.

It belongs to the homogentisate dioxygenase family. In terms of assembly, homohexamer arranged as a dimer of trimers. Requires Fe cation as cofactor.

It carries out the reaction homogentisate + O2 = 4-maleylacetoacetate + H(+). It functions in the pathway amino-acid degradation; L-phenylalanine degradation; acetoacetate and fumarate from L-phenylalanine: step 4/6. In terms of biological role, catalyzes the conversion of homogentisate to maleylacetoacetate. The polypeptide is Homogentisate 1,2-dioxygenase (Hgd) (Mus musculus (Mouse)).